We begin with the raw amino-acid sequence, 499 residues long: Aspartyl/glutamyl-tRNA(Asn/Gln) amidotransferase subunit B (499 aa).

This sequence belongs to the GatB/GatE family. GatB subfamily. As to quaternary structure, heterotrimer of A, B and C subunits.

The catalysed reaction is L-glutamyl-tRNA(Gln) + L-glutamine + ATP + H2O = L-glutaminyl-tRNA(Gln) + L-glutamate + ADP + phosphate + H(+). It catalyses the reaction L-aspartyl-tRNA(Asn) + L-glutamine + ATP + H2O = L-asparaginyl-tRNA(Asn) + L-glutamate + ADP + phosphate + 2 H(+). In terms of biological role, allows the formation of correctly charged Asn-tRNA(Asn) or Gln-tRNA(Gln) through the transamidation of misacylated Asp-tRNA(Asn) or Glu-tRNA(Gln) in organisms which lack either or both of asparaginyl-tRNA or glutaminyl-tRNA synthetases. The reaction takes place in the presence of glutamine and ATP through an activated phospho-Asp-tRNA(Asn) or phospho-Glu-tRNA(Gln). This chain is Aspartyl/glutamyl-tRNA(Asn/Gln) amidotransferase subunit B, found in Bartonella tribocorum (strain CIP 105476 / IBS 506).